The chain runs to 295 residues: Indole-3-glycerol phosphate synthase (295 aa).

The protein belongs to the TrpC family.

It catalyses the reaction 1-(2-carboxyphenylamino)-1-deoxy-D-ribulose 5-phosphate + H(+) = (1S,2R)-1-C-(indol-3-yl)glycerol 3-phosphate + CO2 + H2O. The protein operates within amino-acid biosynthesis; L-tryptophan biosynthesis; L-tryptophan from chorismate: step 4/5. The chain is Indole-3-glycerol phosphate synthase from Prochlorococcus marinus (strain MIT 9211).